The chain runs to 114 residues: Fumarate reductase subunit D (114 aa).

A run of 3 helical transmembrane segments spans residues 24–44 (VSAI…PFGL), 50–70 (LITF…TIFP), and 92–112 (GGFI…FAVI).

This sequence belongs to the FrdD family. Part of an enzyme complex containing four subunits: a flavoprotein (FrdA), an iron-sulfur protein (FrdB), and two hydrophobic anchor proteins (FrdC and FrdD).

It localises to the cell inner membrane. Functionally, anchors the catalytic components of the fumarate reductase complex to the cell membrane, binds quinones. This Haemophilus influenzae (strain PittEE) protein is Fumarate reductase subunit D.